Here is a 166-residue protein sequence, read N- to C-terminus: Ribosome maturation factor RimM (166 aa).

Residues 91 to 163 (EDEFYEFQLI…KMQITPPEGW (73 aa)) form the PRC barrel domain.

It belongs to the RimM family. In terms of assembly, binds ribosomal protein uS19.

Its subcellular location is the cytoplasm. An accessory protein needed during the final step in the assembly of 30S ribosomal subunit, possibly for assembly of the head region. Essential for efficient processing of 16S rRNA. May be needed both before and after RbfA during the maturation of 16S rRNA. It has affinity for free ribosomal 30S subunits but not for 70S ribosomes. This Sulfurihydrogenibium sp. (strain YO3AOP1) protein is Ribosome maturation factor RimM.